A 175-amino-acid chain; its full sequence is Crossover junction endodeoxyribonuclease RuvC (175 aa).

Residues Asp-12, Glu-72, and Asp-144 contribute to the active site. Asp-12, Glu-72, and Asp-144 together coordinate Mg(2+).

This sequence belongs to the RuvC family. As to quaternary structure, homodimer which binds Holliday junction (HJ) DNA. The HJ becomes 2-fold symmetrical on binding to RuvC with unstacked arms; it has a different conformation from HJ DNA in complex with RuvA. In the full resolvosome a probable DNA-RuvA(4)-RuvB(12)-RuvC(2) complex forms which resolves the HJ. Mg(2+) is required as a cofactor.

Its subcellular location is the cytoplasm. The catalysed reaction is Endonucleolytic cleavage at a junction such as a reciprocal single-stranded crossover between two homologous DNA duplexes (Holliday junction).. Its function is as follows. The RuvA-RuvB-RuvC complex processes Holliday junction (HJ) DNA during genetic recombination and DNA repair. Endonuclease that resolves HJ intermediates. Cleaves cruciform DNA by making single-stranded nicks across the HJ at symmetrical positions within the homologous arms, yielding a 5'-phosphate and a 3'-hydroxyl group; requires a central core of homology in the junction. The consensus cleavage sequence is 5'-(A/T)TT(C/G)-3'. Cleavage occurs on the 3'-side of the TT dinucleotide at the point of strand exchange. HJ branch migration catalyzed by RuvA-RuvB allows RuvC to scan DNA until it finds its consensus sequence, where it cleaves and resolves the cruciform DNA. The chain is Crossover junction endodeoxyribonuclease RuvC from Beijerinckia indica subsp. indica (strain ATCC 9039 / DSM 1715 / NCIMB 8712).